The sequence spans 401 residues: UDP-N-acetylglucosamine--N-acetylmuramyl-(pentapeptide) pyrophosphoryl-undecaprenol N-acetylglucosamine transferase (401 aa).

Residues 1-24 are disordered; that stretch reads MTRISVPAGQERNDGGISVPAGQE. UDP-N-acetyl-alpha-D-glucosamine-binding positions include 39-41, Asn-157, Arg-194, Ser-228, and Gln-324; that span reads TAG.

It belongs to the glycosyltransferase 28 family. MurG subfamily.

The protein localises to the cell membrane. The catalysed reaction is di-trans,octa-cis-undecaprenyl diphospho-N-acetyl-alpha-D-muramoyl-L-alanyl-D-glutamyl-meso-2,6-diaminopimeloyl-D-alanyl-D-alanine + UDP-N-acetyl-alpha-D-glucosamine = di-trans,octa-cis-undecaprenyl diphospho-[N-acetyl-alpha-D-glucosaminyl-(1-&gt;4)]-N-acetyl-alpha-D-muramoyl-L-alanyl-D-glutamyl-meso-2,6-diaminopimeloyl-D-alanyl-D-alanine + UDP + H(+). It functions in the pathway cell wall biogenesis; peptidoglycan biosynthesis. Cell wall formation. Catalyzes the transfer of a GlcNAc subunit on undecaprenyl-pyrophosphoryl-MurNAc-pentapeptide (lipid intermediate I) to form undecaprenyl-pyrophosphoryl-MurNAc-(pentapeptide)GlcNAc (lipid intermediate II). In Mycolicibacterium vanbaalenii (strain DSM 7251 / JCM 13017 / BCRC 16820 / KCTC 9966 / NRRL B-24157 / PYR-1) (Mycobacterium vanbaalenii), this protein is UDP-N-acetylglucosamine--N-acetylmuramyl-(pentapeptide) pyrophosphoryl-undecaprenol N-acetylglucosamine transferase.